Consider the following 336-residue polypeptide: Potassium channel subfamily K member 1 (336 aa).

At 1–20 the chain is on the cytoplasmic side; the sequence is MLQSLAGSSCVRLVERHRSA. The chain crosses the membrane as a helical span at residues 21 to 41; the sequence is WCFGFLVLGYLLYLVFGAVVF. Topologically, residues 42–103 are extracellular; sequence SSVELPYEDL…SNASGNWNWD (62 aa). Asn-95 carries N-linked (GlcNAc...) asparagine glycosylation. Residues 104–116 constitute an intramembrane region (helical); sequence FASALFFASTVLS. An intramembrane segment occupies 117–122; that stretch reads TTGYGH. The tract at residues 117 to 122 is selectivity filter 1; the sequence is TTGYGH. Topologically, residues 123-132 are extracellular; sequence TVPLSDGGKA. Residues 133–156 form a helical membrane-spanning segment; sequence FCIIYSVIGIPFTLLFLTAVVQRV. Topologically, residues 157 to 181 are cytoplasmic; the sequence is TVHVTRRPVLYFHVRWGFSKQVVAI. The helical transmembrane segment at 182-202 threads the bilayer; sequence VHAVLLGLITVSCFFFIPAAV. Residues 203–211 lie on the Extracellular side of the membrane; sequence FSVLEDDWN. The helical intramembrane region spans 212–224; that stretch reads FLESFYFCFISLS. The selectivity filter 2 stretch occupies residues 225–230; it reads TIGLGD. An intramembrane segment occupies 225 to 231; the sequence is TIGLGDY. Residues 232–243 are Extracellular-facing; that stretch reads VPGEGYNQKFRE. The helical transmembrane segment at 244-267 threads the bilayer; sequence LYKIGITCYLLLGLIAMLVVLETF. The Cytoplasmic segment spans residues 268 to 336; sequence CELHELKKFR…SACADGPANH (69 aa). Residue Lys-274 forms a Glycyl lysine isopeptide (Lys-Gly) (interchain with G-Cter in SUMO) linkage. The segment at 293 to 299 is important for intracellular retention in recycling endosomes; sequence IIEHDQL. The tract at residues 315 to 336 is disordered; that stretch reads QKQNEPFVATPSSACADGPANH. At Ser-326 the chain carries Phosphoserine.

It belongs to the two pore domain potassium channel (TC 1.A.1.8) family. Homodimer; disulfide-linked. Heterodimer with KCNK2; disulfide-linked. In astrocytes, forms mostly heterodimeric potassium channels with KCNK2, with only a minor proportion of functional channels containing homodimeric KCNK1. Interacts with KCNK3 and KCNK9, forming functional heterodimeric channels. Interacts with GNG4. Identified in a complex with PSD and ARF6; interacts only with PSD that is bound to ARF6. Interacts with UBE2I. Sumoylation is controversial. Sumoylated by UBE2I. Not sumoylated when expressed in xenopus oocytes or mammalian cells. Sumoylation inactivates the channel, but does not interfere with expression at the cell membrane. Sumoylation of a single subunit is sufficient to silence the dimeric channel. Sumoylation of KCNK1 is sufficient to silence heterodimeric channels formed by KCNK1 and KCNK3 or KCNK9. Desumoylated by SENP1; this activates the channel. Desumoylated by SENP1; this strongly increases halothane-mediated activation of heterodimeric channels formed with KCNK9. SENP1 treatment has no effect. In terms of tissue distribution, expressed in renal distal tubules, especially in cortical collecting duct and cortical thick ascending limb, with lower levels in the connecting tubule.

The protein localises to the cell membrane. It localises to the recycling endosome. It is found in the synaptic cell membrane. The protein resides in the cytoplasmic vesicle. Its subcellular location is the perikaryon. The protein localises to the cell projection. It localises to the dendrite. It is found in the apical cell membrane. It catalyses the reaction K(+)(in) = K(+)(out). The enzyme catalyses NH4(+)(in) = NH4(+)(out). It carries out the reaction Na(+)(in) = Na(+)(out). The catalysed reaction is Rb(+)(in) = Rb(+)(out). It catalyses the reaction Cs(+)(in) = Cs(+)(out). The enzyme catalyses Li(+)(in) = Li(+)(out). It carries out the reaction L-glutamate(out) = L-glutamate(in). The catalysed reaction is chloride(in) = chloride(out). In terms of biological role, ion channel that contributes to passive transmembrane potassium transport and to the regulation of the resting membrane potential in brain astrocytes, but also in kidney and in other tissues. Forms dimeric channels through which potassium ions pass in accordance with their electrochemical gradient. The channel is selective for K(+) ions at physiological potassium concentrations and at neutral pH, but becomes permeable to Na(+) at subphysiological K(+) levels and upon acidification of the extracellular medium. The homodimer has very low potassium channel activity, when expressed in heterologous systems, and can function as weakly inward rectifying potassium channel. Channel activity is modulated by activation of serotonin receptors. Heterodimeric channels containing KCNK1 and KCNK2 have much higher activity, and may represent the predominant form in astrocytes. Heterodimeric channels containing KCNK1 and KCNK3 or KCNK9 have much higher activity. Heterodimeric channels formed by KCNK1 and KCNK9 may contribute to halothane-sensitive currents. Mediates outward rectifying potassium currents in dentate gyrus granule cells and contributes to the regulation of their resting membrane potential. Contributes to the regulation of action potential firing in dentate gyrus granule cells and down-regulates their intrinsic excitability. In astrocytes, the heterodimer formed by KCNK1 and KCNK2 is required for rapid glutamate release in response to activation of G-protein coupled receptors, such as F2R and CNR1. Required for normal ion and water transport in the kidney. Contributes to the regulation of the resting membrane potential of pancreatic beta cells. The low channel activity of homodimeric KCNK1 may be due to sumoylation. The low channel activity may be due to rapid internalization from the cell membrane and retention in recycling endosomes. Permeable to monovalent cations with ion selectivity for K(+) &gt; Rb(+) &gt;&gt; NH4(+) &gt;&gt; Cs(+) = Na(+) = Li(+). The chain is Potassium channel subfamily K member 1 from Oryctolagus cuniculus (Rabbit).